A 176-amino-acid polypeptide reads, in one-letter code: Co-chaperone protein HscB (176 aa).

In terms of domain architecture, J spans 2 to 74 (DYFTLFGLPA…LMRAEYLLSL (73 aa)).

It belongs to the HscB family. Interacts with HscA and stimulates its ATPase activity. Interacts with IscU.

Functionally, co-chaperone involved in the maturation of iron-sulfur cluster-containing proteins. Seems to help targeting proteins to be folded toward HscA. This chain is Co-chaperone protein HscB, found in Escherichia coli O7:K1 (strain IAI39 / ExPEC).